Reading from the N-terminus, the 175-residue chain is Sec-independent protein translocase protein TatB (175 aa).

Residues 1-21 (MLDLGLSKMALIGVVALVVLG) traverse the membrane as a helical segment. Residues 94 to 115 (SAVSPGGSAAADAPDGPSAASG) show a composition bias toward low complexity. Disordered regions lie at residues 94–118 (SAVSPGGSAAADAPDGPSAASGEPS) and 153–175 (VQSGAARVARHRPASLRRPARFL). The segment covering 160 to 175 (VARHRPASLRRPARFL) has biased composition (basic residues).

The protein belongs to the TatB family. As to quaternary structure, the Tat system comprises two distinct complexes: a TatABC complex, containing multiple copies of TatA, TatB and TatC subunits, and a separate TatA complex, containing only TatA subunits. Substrates initially bind to the TatABC complex, which probably triggers association of the separate TatA complex to form the active translocon.

It localises to the cell inner membrane. Functionally, part of the twin-arginine translocation (Tat) system that transports large folded proteins containing a characteristic twin-arginine motif in their signal peptide across membranes. Together with TatC, TatB is part of a receptor directly interacting with Tat signal peptides. TatB may form an oligomeric binding site that transiently accommodates folded Tat precursor proteins before their translocation. This chain is Sec-independent protein translocase protein TatB, found in Burkholderia pseudomallei (strain 1106a).